A 184-amino-acid chain; its full sequence is Cytidylate kinase (184 aa).

ATP is bound at residue 8-16 (GQPGSGKTT).

It belongs to the cytidylate kinase family. Type 2 subfamily.

Its subcellular location is the cytoplasm. It catalyses the reaction CMP + ATP = CDP + ADP. It carries out the reaction dCMP + ATP = dCDP + ADP. This is Cytidylate kinase from Pyrobaculum neutrophilum (strain DSM 2338 / JCM 9278 / NBRC 100436 / V24Sta) (Thermoproteus neutrophilus).